Here is a 363-residue protein sequence, read N- to C-terminus: Flagellar P-ring protein 2 (363 aa).

The signal sequence occupies residues 1-20; it reads MKRIVLLLMSVALFSTAAQA.

Belongs to the FlgI family. As to quaternary structure, the basal body constitutes a major portion of the flagellar organelle and consists of four rings (L,P,S, and M) mounted on a central rod.

Its subcellular location is the periplasm. The protein resides in the bacterial flagellum basal body. Its function is as follows. Assembles around the rod to form the L-ring and probably protects the motor/basal body from shearing forces during rotation. This is Flagellar P-ring protein 2 (flgI2) from Vibrio parahaemolyticus serotype O3:K6 (strain RIMD 2210633).